Consider the following 403-residue polypeptide: Cell cycle checkpoint control protein RAD9B (403 aa).

Residues 285 to 347 (PLSQARRSHP…ASAGQDDIFE (63 aa)) are disordered. S354 and S363 each carry phosphoserine.

Belongs to the rad9 family. As to quaternary structure, interacts with HUS1, HUS1B, RAD1, RAD9A and RAD17.

In Mus musculus (Mouse), this protein is Cell cycle checkpoint control protein RAD9B (Rad9b).